We begin with the raw amino-acid sequence, 458 residues long: MSKTLFDKIWEKHVITGEIGEAQLIYVDLHLVHEVTSPQPFDGLRSTNRRVRRPDLTFATMDHNVPTKDIFNVQDQMSRLQMDTLVKNTKEFDIPLASIGDDKQGIVHVVGPERGLTQPAKVIVCGDSHTATHGAFGAIAFGIGTSEVEHVLATQTIWQVKPKTMGIKVTGKLPKNTYAKDIIMGIIAKYGVSFGVGYAIEFYGETVENLSMEARMTMCNMSIEAGSRTGMVQPDQTTFDYIEGREQAPKDFESAKNYWSQFYTDDESDFDETLTFDVSNLKPMVTWGTNPGMATPVDQSLPAIKDDNDANAYEYIGLHPNMKPVDINLDYIFIGSCTNSRYEDLEIAANMMKGHHLAPNVTAWVVPGSRAIRNRAIKSGIAQIFEEAGCEWREPGCSACLAMNPDKIPAGKHVASTSNRNFIGRQGAGSRTHLASPAMVAAAGIAGHFVDITTDEFV.

Residues C337, C397, and C400 each coordinate [4Fe-4S] cluster.

The protein belongs to the aconitase/IPM isomerase family. LeuC type 1 subfamily. Heterodimer of LeuC and LeuD. The cofactor is [4Fe-4S] cluster.

The catalysed reaction is (2R,3S)-3-isopropylmalate = (2S)-2-isopropylmalate. It participates in amino-acid biosynthesis; L-leucine biosynthesis; L-leucine from 3-methyl-2-oxobutanoate: step 2/4. Catalyzes the isomerization between 2-isopropylmalate and 3-isopropylmalate, via the formation of 2-isopropylmaleate. In Leuconostoc mesenteroides subsp. mesenteroides (strain ATCC 8293 / DSM 20343 / BCRC 11652 / CCM 1803 / JCM 6124 / NCDO 523 / NBRC 100496 / NCIMB 8023 / NCTC 12954 / NRRL B-1118 / 37Y), this protein is 3-isopropylmalate dehydratase large subunit.